Here is a 306-residue protein sequence, read N- to C-terminus: MTDSTPEAGAEGEFTPVKPQESELLVVTGMSGAGRSTAANALEDHGWYVVENLPPQMLTTLADLVARTPNSLPKLAVVVDVRGKAFFADIRDSLNTLAASGISYRVLFLDASDNTLVRRFEQGRRPHPLQGDGRMLDGIAAEREILALLRDSADVVVDTTSLNVHELANQVTGLFSDSGPVVLRLTVMSFGFKYGLPVDANYVADVRFLPNPHWVPALRPHTGLDQDVSDFVLIENDANEFVTRYVRALGPVLEGYRRENKHYATIAVGCTGGKHRSVAVSVELAKRLAQLPRVTVSTKHRDLGRE.

G29–S36 contributes to the ATP binding site. D80 to G83 provides a ligand contact to GTP.

Belongs to the RapZ-like family.

In terms of biological role, displays ATPase and GTPase activities. In Renibacterium salmoninarum (strain ATCC 33209 / DSM 20767 / JCM 11484 / NBRC 15589 / NCIMB 2235), this protein is Nucleotide-binding protein RSal33209_2275.